A 1032-amino-acid chain; its full sequence is Vacuolar membrane protease (1032 aa).

Topologically, residues 1-11 (MKLGNPFVFRP) are cytoplasmic. Residues 12-32 (GPVSFWTTIVYLAIIIPLIYV) form a helical membrane-spanning segment. The Vacuolar segment spans residues 33–415 (QETVPPAPSE…SAFALRGLFA (383 aa)). Asn50, Asn138, and Asn147 each carry an N-linked (GlcNAc...) asparagine glycan. Zn(2+) contacts are provided by His194 and Asp206. The Proton acceptor role is filled by Glu240. Zn(2+) is bound by residues Glu241, Glu266, and His339. Residues 416–436 (WTLTLLITTPLVLFVVTYLLV) form a helical membrane-spanning segment. At 437 to 469 (RDDKWYFFATKVDSTVGDGEETVSFGGWKGFVR) the chain is on the cytoplasmic side. The helical transmembrane segment at 470-490 (FPFALVVATALTIGSVFLLAK) threads the bilayer. Residues 491 to 493 (VNP) lie on the Vacuolar side of the membrane. Residues 494 to 514 (LIIYSSGYSVWAMMISLFYFV) traverse the membrane as a helical segment. Residues 515–532 (SWLLLRGAHFVRPSALQR) are Cytoplasmic-facing. A helical transmembrane segment spans residues 533 to 553 (GFTLIWLFIITWVLSVFAAVA). Residues 554–560 (EDRMNMG) lie on the Vacuolar side of the membrane. A helical transmembrane segment spans residues 561 to 581 (AVYPLAFLHTFAFAAVLISLL). Topologically, residues 582–701 (EQYALPAKQD…WSGRLPTWTW (120 aa)) are cytoplasmic. Positions 595–688 (QVSGENEEEE…RKRSFPPYEN (94 aa)) are disordered. A compositionally biased stretch (acidic residues) spans 599 to 608 (ENEEEEEQEQ). The segment covering 651–660 (SSEQTTTFAN) has biased composition (polar residues). The helical transmembrane segment at 702 to 722 (FIQLLLLVPLYVTVLGNLALV) threads the bilayer. Residues 723–738 (QTTSIGKTGTDGSSLL) lie on the Vacuolar side of the membrane. Residues 739–759 (APLMGVGILAILLLLPLTPFI) form a helical membrane-spanning segment. The Cytoplasmic portion of the chain corresponds to 760–766 (HRVSHHV). The chain crosses the membrane as a helical span at residues 767–787 (PLFLFLVFIGTLIYNLTAFPF). The Vacuolar portion of the chain corresponds to 788–1032 (SDNNRFKFYF…VEITKKIKVA (245 aa)). N-linked (GlcNAc...) asparagine glycosylation is present at Asn940.

The protein belongs to the peptidase M28 family. It depends on Zn(2+) as a cofactor.

The protein resides in the vacuole membrane. May be involved in vacuolar sorting and osmoregulation. In Metarhizium robertsii (strain ARSEF 23 / ATCC MYA-3075) (Metarhizium anisopliae (strain ARSEF 23)), this protein is Vacuolar membrane protease.